Consider the following 384-residue polypeptide: 1-deoxy-D-xylulose 5-phosphate reductoisomerase (384 aa).

The NADPH site is built by T10, G11, S12, I13, R37, N38, and N124. Residue K125 coordinates 1-deoxy-D-xylulose 5-phosphate. Residue E126 participates in NADPH binding. D150 serves as a coordination point for Mn(2+). 1-deoxy-D-xylulose 5-phosphate contacts are provided by S151, E152, S176, and H199. Position 152 (E152) interacts with Mn(2+). NADPH is bound at residue G205. Positions 212, 217, 218, and 221 each coordinate 1-deoxy-D-xylulose 5-phosphate. E221 is a binding site for Mn(2+).

It belongs to the DXR family. Mg(2+) serves as cofactor. Requires Mn(2+) as cofactor.

It catalyses the reaction 2-C-methyl-D-erythritol 4-phosphate + NADP(+) = 1-deoxy-D-xylulose 5-phosphate + NADPH + H(+). The protein operates within isoprenoid biosynthesis; isopentenyl diphosphate biosynthesis via DXP pathway; isopentenyl diphosphate from 1-deoxy-D-xylulose 5-phosphate: step 1/6. Its function is as follows. Catalyzes the NADPH-dependent rearrangement and reduction of 1-deoxy-D-xylulose-5-phosphate (DXP) to 2-C-methyl-D-erythritol 4-phosphate (MEP). The chain is 1-deoxy-D-xylulose 5-phosphate reductoisomerase from Clostridium perfringens (strain ATCC 13124 / DSM 756 / JCM 1290 / NCIMB 6125 / NCTC 8237 / Type A).